A 476-amino-acid polypeptide reads, in one-letter code: Cobyric acid synthase (476 aa).

The 187-residue stretch at 242-428 folds into the GATase cobBQ-type domain; sequence AFRVVVPVPP…LHGLFDTPDA (187 aa). C323 functions as the Nucleophile in the catalytic mechanism. H420 is a catalytic residue.

This sequence belongs to the CobB/CobQ family. CobQ subfamily.

It participates in cofactor biosynthesis; adenosylcobalamin biosynthesis. Catalyzes amidations at positions B, D, E, and G on adenosylcobyrinic A,C-diamide. NH(2) groups are provided by glutamine, and one molecule of ATP is hydrogenolyzed for each amidation. The sequence is that of Cobyric acid synthase from Janthinobacterium sp. (strain Marseille) (Minibacterium massiliensis).